The chain runs to 343 residues: Protein FAM50A-B (343 aa).

Disordered stretches follow at residues 1-25 (MAQY…EKQR) and 125-181 (EEDE…EEEN). A compositionally biased stretch (acidic residues) spans 125–142 (EEDEECEDEESEEEEEEY). Over residues 172 to 181 (PDRDREEEEN) the composition is skewed to basic and acidic residues.

The protein belongs to the FAM50 family.

Its subcellular location is the nucleus. Its function is as follows. Probably involved in the regulation of pre-mRNA splicing. This chain is Protein FAM50A-B (fam50a-b), found in Xenopus laevis (African clawed frog).